A 401-amino-acid chain; its full sequence is Imidazolonepropionase (401 aa).

Fe(3+) is bound by residues H66 and H68. Residues H66 and H68 each coordinate Zn(2+). Residues R75, Y138, and H171 each contribute to the 4-imidazolone-5-propanoate site. Y138 serves as a coordination point for N-formimidoyl-L-glutamate. H236 provides a ligand contact to Fe(3+). H236 contributes to the Zn(2+) binding site. Residue Q239 participates in 4-imidazolone-5-propanoate binding. D311 lines the Fe(3+) pocket. D311 is a binding site for Zn(2+). N313 and G315 together coordinate N-formimidoyl-L-glutamate. T316 is a binding site for 4-imidazolone-5-propanoate.

It belongs to the metallo-dependent hydrolases superfamily. HutI family. Zn(2+) serves as cofactor. Requires Fe(3+) as cofactor.

The protein resides in the cytoplasm. The catalysed reaction is 4-imidazolone-5-propanoate + H2O = N-formimidoyl-L-glutamate. Its pathway is amino-acid degradation; L-histidine degradation into L-glutamate; N-formimidoyl-L-glutamate from L-histidine: step 3/3. Its function is as follows. Catalyzes the hydrolytic cleavage of the carbon-nitrogen bond in imidazolone-5-propanoate to yield N-formimidoyl-L-glutamate. It is the third step in the universal histidine degradation pathway. The polypeptide is Imidazolonepropionase (Pseudomonas syringae pv. tomato (strain ATCC BAA-871 / DC3000)).